Reading from the N-terminus, the 401-residue chain is uncharacterized protein (401 aa).

Residues Cys7, Cys13, Cys16, and Cys94 each coordinate [4Fe-4S] cluster. Gln230, Tyr259, Glu280, and Asp328 together coordinate S-adenosyl-L-methionine. Cys355 serves as the catalytic Nucleophile.

Belongs to the class I-like SAM-binding methyltransferase superfamily. RNA M5U methyltransferase family.

This is an uncharacterized protein from Chlamydia pneumoniae (Chlamydophila pneumoniae).